Here is a 349-residue protein sequence, read N- to C-terminus: Bifunctional nitrilase/nitrile hydratase NIT4A (349 aa).

Residues 29-301 form the CN hydrolase domain; it reads VRATVVQAST…EALISADLDL (273 aa). Glu69 functions as the Proton acceptor in the catalytic mechanism. Lys156 is an active-site residue. Cys190 acts as the Nucleophile in catalysis.

It belongs to the carbon-nitrogen hydrolase superfamily. Nitrilase family. As to expression, ubiquitous.

The enzyme catalyses L-asparagine = 3-cyano-L-alanine + H2O. The catalysed reaction is 3-cyano-L-alanine + 2 H2O = L-aspartate + NH4(+). In terms of biological role, involved in the cyanide detoxification pathway. Has nitrilase and nitrile-hydratase activity in the ratio 4.0:1, producing both asparagine and aspartic acid from beta-cyano-L-alanine (Ala(CN)). Can also use 3-phenylpropionitrile as substrate, but not indole-3-acetonitrile. In Lupinus angustifolius (Narrow-leaved blue lupine), this protein is Bifunctional nitrilase/nitrile hydratase NIT4A (NIT4A).